Here is a 43-residue protein sequence, read N- to C-terminus: Parvalbumin beta (43 aa).

EF-hand domains follow at residues 1–20 (KVFE…LKLF) and 22–43 (LSSA…ALVK). Aspartate 7, aspartate 9, serine 11, phenylalanine 12, glutamate 14, glutamate 16, and glutamate 37 together coordinate Ca(2+).

In terms of tissue distribution, detected in muscle and cutaneous mucus. In the skin, detected in cells in the basal region of the glandular epithelium of the dermal mucus glands (at protein level).

It is found in the cytoplasm. The protein localises to the secreted. In terms of biological role, in muscle, parvalbumin is thought to be involved in relaxation after contraction. It binds two calcium ions. This chain is Parvalbumin beta, found in Rana temporaria (European common frog).